The sequence spans 215 residues: MPSYTLHYFNHRGRAEICRMLFAAAGVQYNDRRVDCSEWTGMRNQMPCSMMPMLEIDNRHQIPQSMAIARYLAREFGFHGRNNLDMARVDFISDCFYDILDDYLRMYHDKDGRMMFQRSYDNGSSSERRMRFQETCRRILPFMERTLEMRNGGNQFFMGDQMTMADLMCYCALENPLTDDTSMLSSYPKLQALRNRVMSHMKMSPYLKSRSSTDF.

The GST N-terminal domain maps to 2-80 (PSYTLHYFNH…YLAREFGFHG (79 aa)). The region spanning 82–215 (NNLDMARVDF…YLKSRSSTDF (134 aa)) is the GST C-terminal domain.

It belongs to the GST superfamily. Lens.

Its function is as follows. S-crystallins are structural components of squids and octopi eye lens. Contains relatively little GST activity (1/1000 of that of mammalian GST enzyme). The sequence is that of S-crystallin 2 (OCTS2) from Octopus vulgaris (Common octopus).